The sequence spans 314 residues: Very long chain fatty acid elongase 4 (314 aa).

Asn20 carries an N-linked (GlcNAc...) asparagine glycan. 7 helical membrane passes run 42 to 62 (LMQS…FVWL), 78 to 98 (VLII…RELF), 127 to 147 (ALWW…FFIL), 165 to 185 (MFTL…FFGA), 188 to 208 (NSFI…GPWI), 217 to 237 (YLTM…ALSL), and 247 to 267 (MHWA…NFYI). Residues 275–314 (KPKAGKTAMNGISANGVSKSEKQLMIENGKKQKNGKAKGD) are disordered. The span at 293–304 (KSEKQLMIENGK) shows a compositional bias: basic and acidic residues. Over residues 305 to 314 (KQKNGKAKGD) the composition is skewed to basic residues. The short motif at 310–314 (KAKGD) is the Di-lysine motif element.

It belongs to the ELO family. ELOVL4 subfamily. In terms of assembly, oligomer. Post-translationally, N-glycosylated. Expressed in the retina and at much lower level in the brain. Ubiquitous, highest expression in thymus, followed by testis, small intestine, ovary, and prostate. Little or no expression in heart, lung, liver, or leukocates.

The protein localises to the endoplasmic reticulum membrane. It catalyses the reaction a very-long-chain acyl-CoA + malonyl-CoA + H(+) = a very-long-chain 3-oxoacyl-CoA + CO2 + CoA. It carries out the reaction tetracosanoyl-CoA + malonyl-CoA + H(+) = 3-oxohexacosanoyl-CoA + CO2 + CoA. The catalysed reaction is hexacosanoyl-CoA + malonyl-CoA + H(+) = 3-oxooctacosanyol-CoA + CO2 + CoA. The enzyme catalyses octacosanoyl-CoA + malonyl-CoA + H(+) = 3-oxo-triacontanoyl-CoA + CO2 + CoA. It catalyses the reaction triacontanoyl-CoA + malonyl-CoA + H(+) = 3-oxo-dotriacontanoyl-CoA + CO2 + CoA. It carries out the reaction (19Z,22Z,25Z,28Z,31Z)-tetratriacontapentaenoyl-CoA + malonyl-CoA + H(+) = 3-oxo-(21Z,24Z,27Z,30Z,33Z)-hexatriacontapentaenoyl-CoA + CO2 + CoA. The catalysed reaction is (4Z,7Z,10Z,13Z,16Z,19Z)-docosahexaenoyl-CoA + malonyl-CoA + H(+) = 3-oxo-(6Z,9Z,12Z,15Z,18Z,21Z)-tetracosahexaenoyl-CoA + CO2 + CoA. The enzyme catalyses (7Z,10Z,13Z,16Z)-docosatetraenoyl-CoA + malonyl-CoA + H(+) = (9Z,12Z,15Z,18Z)-3-oxotetracosatetraenoyl-CoA + CO2 + CoA. It catalyses the reaction (11Z,14Z,17Z,20Z,23Z)-hexacosapentaenoyl-CoA + malonyl-CoA + H(+) = 3-oxo-(13Z,16Z,19Z,22Z,25Z)-octacosapentaenoyl-CoA + CO2 + CoA. It carries out the reaction (13Z,16Z,19Z,22Z,25Z)-octacosapentaenoyl-CoA + malonyl-CoA + H(+) = 3-oxo-(15Z,18Z,21Z,24Z,27Z)-triacontapentaenoyl-CoA + CO2 + CoA. The catalysed reaction is (15Z,18Z,21Z,24Z,27Z)-triacontapentaenoyl-CoA + malonyl-CoA + H(+) = 3-oxo-(17Z,20Z,23Z,26Z,29Z)-dotriacontapentaenoyl-CoA + CO2 + CoA. The enzyme catalyses (17Z,20Z,23Z,26Z,29Z)-dotriacontapentaenoyl-CoA + malonyl-CoA + H(+) = 3-oxo-(19Z,22Z,25Z,28Z,31Z)-tetratriacontapentaenoyl-CoA + CO2 + CoA. It catalyses the reaction (21Z,24Z,27Z,30Z,33Z)-hexatriacontapentaenoyl-CoA + malonyl-CoA + H(+) = 3-oxo-(23Z,26Z,29Z,32Z,35Z)-octatriacontapentaenoyl-CoA + CO2 + CoA. It carries out the reaction (11Z,14Z,17Z,20Z)-hexacosatetraenoyl-CoA + malonyl-CoA + H(+) = (13Z,16Z,19Z,22Z)-3-oxooctacosatetraenoyl-CoA + CO2 + CoA. The catalysed reaction is (13Z,16Z,19Z,22Z)-octacosatetraenoyl-CoA + malonyl-CoA + H(+) = 3-oxo-(15Z,18Z,21Z,24Z)-triacontatetraenoyl-CoA + CO2 + CoA. The enzyme catalyses (15Z,18Z,21Z,24Z)-triacontatetraenoyl-CoA + malonyl-CoA + H(+) = 3-oxo-(17Z,20Z,23Z,26Z)-dotriacontatetraenoyl-CoA + CO2 + CoA. It catalyses the reaction (17Z,20Z,23Z,26Z)-dotriacontatetraenoyl-CoA + malonyl-CoA + H(+) = 3-oxo-(19Z,22Z,25Z,28Z)-tetratriacontatetraenoyl-CoA + CO2 + CoA. It carries out the reaction (19Z,22Z,25Z,28Z)-tetratriacontatetraenoyl-CoA + malonyl-CoA + H(+) = 3-oxo-(21Z,24Z,27Z,30Z)-hexatriacontatetraenoyl-CoA + CO2 + CoA. The catalysed reaction is (21Z,24Z,27Z,30Z)-hexatriacontatetraenoyl-CoA + malonyl-CoA + H(+) = 3-oxo-(23Z,26Z,29Z,32Z)-octatriacontatetraenoyl-CoA + CO2 + CoA. The enzyme catalyses (6Z,9Z,12Z,15Z,18Z,21Z)-tetracosahexaenoyl-CoA + malonyl-CoA + H(+) = 3-oxo-(8Z,11Z,14Z,17Z,20Z,23Z)-hexacosahexaenoyl-CoA + CO2 + CoA. It catalyses the reaction (8Z,11Z,14Z,17Z,20Z,23Z)-hexacosahexaenoyl-CoA + malonyl-CoA + H(+) = 3-oxo-(10Z,13Z,16Z,19Z,22Z,25Z)-octacosahexaenoyl-CoA + CO2 + CoA. It carries out the reaction (10Z,13Z,16Z,19Z,22Z,25Z)-octacosahexaenoyl-CoA + malonyl-CoA + H(+) = 3-oxo-(12Z,15Z,18Z,21Z,24Z,27Z)-triacontahexaenoyl-CoA + CO2 + CoA. The catalysed reaction is (12Z,15Z,18Z,21Z,24Z,27Z)-triacontahexaenoyl-CoA + malonyl-CoA + H(+) = 3-oxo-(14Z,17Z,20Z,23Z,26Z,29Z)-dotriacontahexaenoyl-CoA + CO2 + CoA. The enzyme catalyses (14Z,17Z,20Z,23Z,26Z,29Z)-dotriacontahexaenoyl-CoA + malonyl-CoA + H(+) = 3-oxo-(16Z,19Z,22Z,25Z,28Z,31Z)-tetratriacontahexaenoyl-CoA + CO2 + CoA. It catalyses the reaction (16Z,19Z,22Z,25Z,28Z,31Z)-tetratriacontahexaenoyl-CoA + malonyl-CoA + H(+) = 3-oxo-(18Z,21Z,24Z,27Z,30Z,33Z)-hexatriacontahexaenoyl-CoA + CO2 + CoA. It carries out the reaction (9Z,12Z,15Z,18Z,21Z)-tetracosapentaenoyl-CoA + malonyl-CoA + H(+) = 3-oxo-(11Z,14Z,17Z,20Z,23Z)-hexacosapentaenoyl-CoA + CO2 + CoA. It participates in lipid metabolism; fatty acid biosynthesis. Its function is as follows. Catalyzes the first and rate-limiting reaction of the four reactions that constitute the long-chain fatty acids elongation cycle. This endoplasmic reticulum-bound enzymatic process allows the addition of 2 carbons to the chain of long- and very long-chain fatty acids (VLCFAs) per cycle. Condensing enzyme that catalyzes the synthesis of very long chain saturated (VLC-SFA) and polyunsaturated (PUFA) fatty acids that are involved in multiple biological processes as precursors of membrane lipids and lipid mediators. May play a critical role in early brain and skin development. The sequence is that of Very long chain fatty acid elongase 4 from Homo sapiens (Human).